The primary structure comprises 536 residues: Caspase recruitment domain-containing protein 9 (536 aa).

Phosphoserine is present on S2. The Zn(2+) site is built by D3, C10, and H73. The 93-residue stretch at 6-98 (NDDECWSTLE…QLYRKVTGKE (93 aa)) folds into the CARD domain. Positions 99-116 (PARVFSMIIDASGESGLT) are linker. Positions 117–272 (QLLMTEVMKL…ELQVSVQEGK (156 aa)) form a coiled coil. A Glycyl lysine isopeptide (Lys-Gly) (interchain with G-Cter in ubiquitin) cross-link involves residue K125. At T231 the chain carries Phosphothreonine; by PKC/PRKCD. Residue S277 is modified to Phosphoserine. Positions 303-415 (SLRKDLRQAE…LLAAEGRLKQ (113 aa)) form a coiled coil. S424, S425, S431, S451, S461, S483, and S498 each carry phosphoserine. The disordered stretch occupies residues 425–451 (SDLEDSSPRNSQELSLPQDLEEDAQLS). The interval 476–536 (LTHGMGPSSS…GSDNTDTEGS (61 aa)) is disordered. Basic and acidic residues predominate over residues 487–502 (PPEKERRRLKESFENY). Phosphothreonine; by CK2 is present on residues T531 and T533.

In terms of assembly, monomer. Homodimer; homodimerization is mediated by the CARD domain which forms an extensive interaction with the adjacent linker and coiled-coil regions; leads to an autoinhibited state. Homomultimer; polymerizes following activation, forming a nucleating helical template that seeds BCL10-filament formation via a CARD-CARD interaction. Interacts (via CARD domain) with BCL10 (via CARD domain); interaction takes place following CARD9 activation and polymerization, leading to the formation of a filamentous CBM complex assembly. Component of a CBM complex (CARD9-BCL10, MALT1), composed of CARD9, BCL10 and MALT1. Interacts with RASGRF1. Interacts with NOD2 (via NACHT domain); interaction is direct. Interacts with RIPK2. Interacts with VHL; without leading to protein degradation. In terms of processing, phosphorylated at Thr-231 by PRKCD downstream of C-type lectin receptors activation: phosphorylation promotes interaction with BCL10, followed by activation of NF-kappa-B and MAP kinase p38 pathways. Phosphorylated at Thr-531 and Thr-531 by CK2 following interaction with VHL, leading to inhibit the ability to activate NF-kappa-B. Ubiquitinated at Lys-125 via 'Lys-27'-linked ubiquitin by TRIM62 downstream of C-type lectin receptors activation; leading to CARD9 activation, followed by activation of NF-kappa-B and MAP kinase p38 pathways. Deubiquitinated at Lys-125 by USP15, inhibiting CARD9. In terms of tissue distribution, specifically expressed in myeloid cells. Not expressed in non-lymphoid organs.

It is found in the cytoplasm. Maintained in an autoinhibited state via homodimerization in which the CARD domain forms an extensive interaction with the adjacent linker and coiled-coil regions. Activation downstream of C-type lectin receptors, by phosphorylation by PRKCD and/or ubiquitination by TRIM62, triggers disruption of the CARD domain-coiled coil interface, CARD9 homooligomerization and BCL10 recruitment, followed by activation of NF-kappa-B and MAP kinase p38 pathways. Zinc-binding inhibits activation by stabilizing the CARD ground-state conformation and restricting its capacity to form BCL10-nucleating filaments. Functionally, adapter protein that plays a key role in innate immune response against fungi by forming signaling complexes downstream of C-type lectin receptors. CARD9-mediated signals are essential for antifungal immunity against a subset of fungi from the phylum Ascomycota. Transduces signals in myeloid cells downstream of C-type lectin receptors CLEC7A (dectin-1), CLEC6A (dectin-2) and CLEC4E (Mincle), which detect pathogen-associated molecular pattern metabolites (PAMPs), such as fungal carbohydrates, and trigger CARD9 activation. Upon activation, CARD9 homooligomerizes to form a nucleating helical template that recruits BCL10 via CARD-CARD interaction, thereby promoting polymerization of BCL10 and subsequent recruitment of MALT1: this leads to activation of NF-kappa-B and MAP kinase p38 (MAPK11, MAPK12, MAPK13 and/or MAPK14) pathways which stimulate expression of genes encoding pro-inflammatory cytokines and chemokines. CARD9 signaling in antigen-presenting cells links innate sensing of fungi to the activation of adaptive immunity and provides a cytokine milieu that induces the development and subsequent of interleukin 17-producing T helper (Th17) cells. Also involved in activation of myeloid cells via classical ITAM-associated receptors and TLR: required for TLR-mediated activation of MAPK, while it is not required for TLR-induced activation of NF-kappa-B. CARD9 can also be engaged independently of BCL10: forms a complex with RASGRF1 downstream of C-type lectin receptors, which recruits and activates HRAS, leading to ERK activation and the production of cytokines. Acts as an important regulator of the intestinal commensal fungi (mycobiota) component of the gut microbiota. Plays an essential role in antifungal immunity against dissemination of gut fungi: acts by promoting induction of antifungal IgG antibodies response in CX3CR1(+) macrophages to confer protection against disseminated C.albicans or C.auris infection. Also mediates immunity against other pathogens, such as certain bacteria, viruses and parasites; CARD9 signaling is however redundant with other innate immune responses. In response to L.monocytogenes infection, required for the production of inflammatory cytokines activated by intracellular peptidoglycan: acts by connecting NOD2 recognition of peptidoglycan to downstream activation of MAP kinases (MAPK) without activating NF-kappa-B. The protein is Caspase recruitment domain-containing protein 9 of Mus musculus (Mouse).